The following is a 404-amino-acid chain: Argininosuccinate synthase (404 aa).

Residues 10–18 (AYSGGVDTS) and A38 each bind ATP. L-citrulline is bound at residue Y89. G119 provides a ligand contact to ATP. L-aspartate is bound by residues T121, N125, and D126. N125 is an L-citrulline binding site. L-citrulline contacts are provided by R129, S177, S186, E262, and Y274.

This sequence belongs to the argininosuccinate synthase family. Type 1 subfamily. In terms of assembly, homotetramer.

The protein resides in the cytoplasm. It carries out the reaction L-citrulline + L-aspartate + ATP = 2-(N(omega)-L-arginino)succinate + AMP + diphosphate + H(+). It functions in the pathway amino-acid biosynthesis; L-arginine biosynthesis; L-arginine from L-ornithine and carbamoyl phosphate: step 2/3. The chain is Argininosuccinate synthase from Prochlorococcus marinus (strain MIT 9312).